The following is a 432-amino-acid chain: MTNLLWQKPGVAVDAKIQSFLAGDDVILDREFFLYDIAASKAHAQGLQHIGILSLQELGGLSEQLDLLAADFRSGAFVLDAQYEDCHSAIEARLTERLGDAGRKIHTGRSRNDQILVATRLWLKDKLQRVATLSAEIAKVALDRAQAEAGLPVPGYTHIQRAVVSSAGMWWAGWAEAFIDNAVRADDTVRLVDSNPLGTAAGYGVNLPLDRAHTTAELGFARLLVSPIYAQLSRGKYELAALEALGSATLDLRRIAWDLSLFTSGEFAFVALPAQYTTGSSIMPNKRNPDVIELMRATHASVAAARTEIEQLLSLPSGYHRDLQSSKGAIVHGFGRGLAALELLPALLANLEWRPDKLRAAIDSGMYATDVAVEAAVAGVPFREAYKAAAQAAETAGQGRTPEGSLAARVSPGAAADLQLDVLQARWQALRA.

It belongs to the lyase 1 family. Argininosuccinate lyase subfamily.

The protein resides in the cytoplasm. It catalyses the reaction 2-(N(omega)-L-arginino)succinate = fumarate + L-arginine. The protein operates within amino-acid biosynthesis; L-arginine biosynthesis; L-arginine from L-ornithine and carbamoyl phosphate: step 3/3. The polypeptide is Argininosuccinate lyase (Xanthomonas euvesicatoria pv. vesicatoria (strain 85-10) (Xanthomonas campestris pv. vesicatoria)).